The primary structure comprises 370 residues: Binary larvicide subunit BinA (370 aa).

Positions 1–6 are excised as a propeptide; it reads MRNLDF. Positions 1–155 are beta-trefoil domain; that stretch reads MRNLDFIDSF…LISNKEQIYL (155 aa). An intrachain disulfide couples Cys31 to Cys47. Residues 156 to 370 form a pore-forming domain region; the sequence is TLPSLPENEQ…NTKIITDDQN (215 aa).

This sequence belongs to the toxin_10 family. In terms of assembly, forms a heterodimer with BinB. In terms of processing, processed by proteases in the mosquito gut, probably at both the N- and C-termini.

It is found in the spore. The protein resides in the perispore. Its function is as follows. Component of a binary toxin active against Culex and some Aedes mosquito larvae. The individual subunits are not toxic. BinAB binds to the gastric caecum and posterior midgut of C.quinquefasciatus larvae; this subunit alone binds the entire larval gut. Binary toxin internalization into host gut cells requires both proteins. Toxic to Aedes atropalpus mosquito larvae; mortality towards both C.quinquefasciatus and A.atropalpus is maximal by 48 hours. A.aegypti is not very susceptible to this toxin. The chain is Binary larvicide subunit BinA (binA) from Lysinibacillus sphaericus (Bacillus sphaericus).